The chain runs to 498 residues: Probable cytosol aminopeptidase (498 aa).

Mn(2+) contacts are provided by K271 and D276. K283 is a catalytic residue. Positions 294, 353, and 355 each coordinate Mn(2+). R357 is an active-site residue.

This sequence belongs to the peptidase M17 family. Requires Mn(2+) as cofactor.

It is found in the cytoplasm. It carries out the reaction Release of an N-terminal amino acid, Xaa-|-Yaa-, in which Xaa is preferably Leu, but may be other amino acids including Pro although not Arg or Lys, and Yaa may be Pro. Amino acid amides and methyl esters are also readily hydrolyzed, but rates on arylamides are exceedingly low.. The enzyme catalyses Release of an N-terminal amino acid, preferentially leucine, but not glutamic or aspartic acids.. In terms of biological role, presumably involved in the processing and regular turnover of intracellular proteins. Catalyzes the removal of unsubstituted N-terminal amino acids from various peptides. The protein is Probable cytosol aminopeptidase of Bordetella petrii (strain ATCC BAA-461 / DSM 12804 / CCUG 43448).